Here is a 452-residue protein sequence, read N- to C-terminus: Pup--protein ligase (452 aa).

Position 9 (glutamate 9) interacts with Mg(2+). Arginine 53 lines the ATP pocket. Mg(2+) is bound at residue tyrosine 55. Aspartate 57 functions as the Proton acceptor in the catalytic mechanism. A Mg(2+)-binding site is contributed by glutamate 63. Residues threonine 66 and tryptophan 419 each contribute to the ATP site.

The protein belongs to the Pup ligase/Pup deamidase family. Pup-conjugating enzyme subfamily.

The enzyme catalyses ATP + [prokaryotic ubiquitin-like protein]-L-glutamate + [protein]-L-lysine = ADP + phosphate + N(6)-([prokaryotic ubiquitin-like protein]-gamma-L-glutamyl)-[protein]-L-lysine.. Its pathway is protein degradation; proteasomal Pup-dependent pathway. It functions in the pathway protein modification; protein pupylation. Its function is as follows. Catalyzes the covalent attachment of the prokaryotic ubiquitin-like protein modifier Pup to the proteasomal substrate proteins, thereby targeting them for proteasomal degradation. This tagging system is termed pupylation. The ligation reaction involves the side-chain carboxylate of the C-terminal glutamate of Pup and the side-chain amino group of a substrate lysine. This Salinispora tropica (strain ATCC BAA-916 / DSM 44818 / JCM 13857 / NBRC 105044 / CNB-440) protein is Pup--protein ligase.